The primary structure comprises 551 residues: Chloride channel CLIC-like protein 1 (551 aa).

Positions 1 to 18 (MLCSLLLCECLLLVAGYA) are cleaved as a signal peptide. The Lumenal segment spans residues 19–184 (HDDDWIDPTD…EDSFGVDPYN (166 aa)). The helical transmembrane segment at 185-205 (VLMVLLCLLCIVVLVATELWT) threads the bilayer. At 206–216 (YVRWYTQLRRV) the chain is on the cytoplasmic side. A helical transmembrane segment spans residues 217–237 (LIISFLFSLGWNWMYLYKLAF). Residues 238-329 (AQHQAEVAKM…GEFIKALMKE (92 aa)) are Lumenal-facing. Residues 330 to 350 (IPALLHLPVLIIMALAILSFC) traverse the membrane as a helical segment. At 351 to 551 (YGAGKSVHVL…GQDPVSSPCG (201 aa)) the chain is on the cytoplasmic side. The interval 363 to 415 (IGGPESEPPQALRPRDRRRQEEIDYRPDGGAGDADFHYRGQMGPTEQGPYAKT) is disordered. The segment covering 380–389 (RRQEEIDYRP) has biased composition (basic and acidic residues). Phosphoserine occurs at positions 438 and 464. The tract at residues 447 to 551 (VPDAEAREHP…GQDPVSSPCG (105 aa)) is disordered. Threonine 482 carries the phosphothreonine modification. A compositionally biased stretch (polar residues) spans 488 to 508 (TESSQSAKPVSGQDTSGNTEG). Residues serine 509, serine 524, and serine 532 each carry the phosphoserine modification.

It belongs to the chloride channel MCLC family. As to quaternary structure, homomultimers. Interacts with mitochondrial protein PIGBOS1 (via C-terminus); the interaction occurs at the mitochondria-associated endoplasmic reticulum (ER) membrane, a zone of contact between the ER and mitochondrial membranes, but does not appear to play a role in ER-mitochondria tethering and is not affected by ER stress. Interacts with CALR. In terms of tissue distribution, expressed in the retina of the eye, with extensive expression in the lamina cribrosa, optic nerve, ganglion cell layer, inner nuclear layer, outer nuclear layer and retinal pigment epithelium.

It localises to the endoplasmic reticulum membrane. It carries out the reaction chloride(in) = chloride(out). It catalyses the reaction bromide(in) = bromide(out). The catalysed reaction is nitrate(in) = nitrate(out). The enzyme catalyses fluoride(in) = fluoride(out). Its activity is regulated as follows. Inhibited by ER lumenal Ca(2+). Its function is as follows. Anion-selective channel with Ca(2+)-dependent and voltage-independent gating. Permeable to small monovalent anions with selectivity for bromide &gt; chloride &gt; nitrate &gt; fluoride. Operates in the endoplasmic reticulum (ER) membrane where it mediates chloride efflux to compensate for the loss of positive charges from the ER lumen upon Ca(2+) release. Contributes to the maintenance of ER Ca(2+) pools and activation of unfolded protein response to prevent accumulation of misfolded proteins in the ER lumen. Particularly involved in ER homeostasis mechanisms underlying motor neurons and retinal photoreceptors survival. The chain is Chloride channel CLIC-like protein 1 from Homo sapiens (Human).